The following is a 278-amino-acid chain: UPF0276 protein Ssed_2857 (278 aa).

Belongs to the UPF0276 family.

The protein is UPF0276 protein Ssed_2857 of Shewanella sediminis (strain HAW-EB3).